Consider the following 308-residue polypeptide: Protein translocase subunit SecF (308 aa).

Transmembrane regions (helical) follow at residues 12-32 (YFIF…TKGF), 127-147 (AKNA…YITI), 152-172 (IYAL…IGFI), 182-202 (PFIA…IVIF), 234-254 (VYTS…GGST), and 262-282 (LLVG…PLVY).

The protein belongs to the SecD/SecF family. SecF subfamily. As to quaternary structure, forms a complex with SecD. Part of the essential Sec protein translocation apparatus which comprises SecA, SecYEG and auxiliary proteins SecDF. Other proteins may also be involved.

Its subcellular location is the cell inner membrane. Its function is as follows. Part of the Sec protein translocase complex. Interacts with the SecYEG preprotein conducting channel. SecDF uses the proton motive force (PMF) to complete protein translocation after the ATP-dependent function of SecA. This is Protein translocase subunit SecF from Sebaldella termitidis (strain ATCC 33386 / NCTC 11300).